The chain runs to 305 residues: Putative S-adenosyl-L-methionine-dependent methyltransferase Mvan_1344 (305 aa).

S-adenosyl-L-methionine-binding positions include Asp-130 and 159 to 160 (DL).

The protein belongs to the UPF0677 family.

Exhibits S-adenosyl-L-methionine-dependent methyltransferase activity. The chain is Putative S-adenosyl-L-methionine-dependent methyltransferase Mvan_1344 from Mycolicibacterium vanbaalenii (strain DSM 7251 / JCM 13017 / BCRC 16820 / KCTC 9966 / NRRL B-24157 / PYR-1) (Mycobacterium vanbaalenii).